We begin with the raw amino-acid sequence, 959 residues long: DEAD-box ATP-dependent RNA helicase rde-12 (959 aa).

A disordered region spans residues 1–336 (MSSFGNNAGG…EGVNAPVRAP (336 aa)). The segment covering 71-97 (GRREDDRSHSRDNHGGSRYGERDDRGN) has biased composition (basic and acidic residues). Polar residues predominate over residues 98–118 (NGRSADNRYSQSNYNYDSNRG). Residues 122–134 (YQRDNHGSKDDRG) show a composition bias toward basic and acidic residues. The span at 137–160 (NQYNDHGSNHNSNSRNDQYRQGSY) shows a compositional bias: polar residues. Basic and acidic residues-rich tracts occupy residues 166-181 (SGYRRDDDRRRNDNDQ) and 189-201 (RDSDRNSPRDHHN). The span at 202 to 213 (YNSQSSPRSHQG) shows a compositional bias: polar residues. 2 stretches are compositionally biased toward basic and acidic residues: residues 219–239 (SAPKEDNQRRYDNHQGGHDSY) and 255–270 (YRNDYRSQQDSRDHRS). Residues 271–280 (GGNNSSSGFK) are compositionally biased toward low complexity. Gly residues predominate over residues 281-301 (NDGGFGGNDNRGFGNNGGGSF). Residues 302 to 317 (GNPNNSYRGNSNNIGG) are compositionally biased toward low complexity. A Q motif motif is present at residues 380–408 (TSWTNSGLHPTILETLKRIKYNNVRTIQG). The Helicase ATP-binding domain maps to 411 to 599 (IPQVLDGHDV…NELMKRLPGQ (189 aa)). An ATP-binding site is contributed by 424–431 (AETSAGKT). Positions 539–542 (DEAD) match the DEAD box motif. Residues 632–792 (KLREILKQNV…KVPDFLDAMA (161 aa)) form the Helicase C-terminal domain. Disordered regions lie at residues 793-834 (KSSR…GGGR) and 858-959 (GGGG…DDEW). Gly residues-rich tracts occupy residues 800-834 (GTSGFGQRGGYGGRGGGFGGTGRGRGGGVFGGGGR) and 858-872 (GGGGFGGVKPSGFGG). The segment covering 930-941 (TLGSSTFGTANN) has biased composition (polar residues). The segment covering 942 to 959 (ADEEPTETGADGNDDDEW) has biased composition (acidic residues).

The protein belongs to the DEAD box helicase family. DDX3/DED1 subfamily. As to quaternary structure, interacts with wago-1, ergo-1 and rde-1. It depends on Mg(2+) as a cofactor. As to expression, expressed in the soma and germline.

It is found in the cytoplasm. Its subcellular location is the perinuclear region. The protein localises to the cytoplasmic granule. It localises to the P-body. It catalyses the reaction ATP + H2O = ADP + phosphate + H(+). Functionally, probable ATP-dependent RNA helicase involved in RNAi-mediated gene silencing. Specifically required in the endogenous siRNA pathway for biogenesis of secondary endogenous small interfering RNA (siRNA) intermediates called 22G-RNAs. May associate with and recruit rde-10 to primary siRNA-targeted mRNA for secondary siRNA synthesis. May be recruited to target mRNAs by rde-1 and/or ergo-1. The polypeptide is DEAD-box ATP-dependent RNA helicase rde-12 (Caenorhabditis elegans).